The chain runs to 506 residues: Trans-cinnamate 4-monooxygenase (506 aa).

A helical membrane pass occupies residues 3–23 (LLLLEKTLLALFIAATIAVTI). Residues 213–218 (RSRLAQ) and Ala307 contribute to the (E)-cinnamate site. Cys448 provides a ligand contact to heme.

This sequence belongs to the cytochrome P450 family. It depends on heme as a cofactor.

Its subcellular location is the membrane. It carries out the reaction (E)-cinnamate + reduced [NADPH--hemoprotein reductase] + O2 = (E)-4-coumarate + oxidized [NADPH--hemoprotein reductase] + H2O + H(+). The protein operates within phenylpropanoid metabolism; trans-4-coumarate biosynthesis; trans-4-coumarate from trans-cinnamate: step 1/1. Its function is as follows. Catalyzes the first oxidative step of the phenylpropanoid pathway in higher plants by transforming trans-cinnamate into p-coumarate. The compounds formed by this pathway are essential components for lignification, pollination, and defense against ultraviolet light, predators and pathogens. This chain is Trans-cinnamate 4-monooxygenase (CYP73A3), found in Medicago sativa (Alfalfa).